A 388-amino-acid polypeptide reads, in one-letter code: Succinate--CoA ligase [ADP-forming] subunit beta (388 aa).

The region spanning 9–244 (KEIFRSMGVA…LEEEDPKEIE (236 aa)) is the ATP-grasp domain. ATP contacts are provided by residues Lys46, 53–55 (GRG), Glu99, Cys102, and Glu107. 2 residues coordinate Mg(2+): Asn199 and Asp213. Substrate-binding positions include Asn264 and 321-323 (GIM).

This sequence belongs to the succinate/malate CoA ligase beta subunit family. Heterotetramer of two alpha and two beta subunits. It depends on Mg(2+) as a cofactor.

The enzyme catalyses succinate + ATP + CoA = succinyl-CoA + ADP + phosphate. It catalyses the reaction GTP + succinate + CoA = succinyl-CoA + GDP + phosphate. It participates in carbohydrate metabolism; tricarboxylic acid cycle; succinate from succinyl-CoA (ligase route): step 1/1. Succinyl-CoA synthetase functions in the citric acid cycle (TCA), coupling the hydrolysis of succinyl-CoA to the synthesis of either ATP or GTP and thus represents the only step of substrate-level phosphorylation in the TCA. The beta subunit provides nucleotide specificity of the enzyme and binds the substrate succinate, while the binding sites for coenzyme A and phosphate are found in the alpha subunit. This chain is Succinate--CoA ligase [ADP-forming] subunit beta, found in Staphylococcus epidermidis (strain ATCC 35984 / DSM 28319 / BCRC 17069 / CCUG 31568 / BM 3577 / RP62A).